The chain runs to 905 residues: Isoleucine--tRNA ligase (905 aa).

Positions 56–66 (PYANGNIHMGT) match the 'HIGH' region motif. Glu563 is an L-isoleucyl-5'-AMP binding site. The 'KMSKS' region signature appears at 604 to 608 (KMSKS). Lys607 serves as a coordination point for ATP.

Belongs to the class-I aminoacyl-tRNA synthetase family. IleS type 1 subfamily. As to quaternary structure, monomer.

The protein resides in the cytoplasm. The enzyme catalyses tRNA(Ile) + L-isoleucine + ATP = L-isoleucyl-tRNA(Ile) + AMP + diphosphate. Functionally, catalyzes the attachment of isoleucine to tRNA(Ile). As IleRS can inadvertently accommodate and process structurally similar amino acids such as valine, to avoid such errors it has two additional distinct tRNA(Ile)-dependent editing activities. One activity is designated as 'pretransfer' editing and involves the hydrolysis of activated Val-AMP. The other activity is designated 'posttransfer' editing and involves deacylation of mischarged Val-tRNA(Ile). This chain is Isoleucine--tRNA ligase, found in Pelagibacter ubique (strain HTCC1062).